The chain runs to 973 residues: Coatomer subunit beta (973 aa).

2 HEAT repeats span residues 98-133 and 134-170; these read HEMI…REAE and LLEQ…VSEH. Residue Ser-181 is modified to Phosphoserine. 2 HEAT repeats span residues 279–317 and 318–354; these read NVLV…NNVG and ALEE…SRNA. Residue Ser-540 is modified to Phosphoserine.

In terms of assembly, oligomeric complex that consists of at least the alpha, beta, beta', gamma, delta, epsilon and zeta subunits. The complex interacts with ARF1 and PAB1. In terms of processing, the N-terminus is blocked.

The protein resides in the cytoplasm. Its subcellular location is the golgi apparatus membrane. The protein localises to the cytoplasmic vesicle. It is found in the COPI-coated vesicle membrane. In terms of biological role, the coatomer is a cytosolic protein complex that binds to dilysine motifs and reversibly associates with Golgi non-clathrin-coated vesicles, which further mediate biosynthetic protein transport from the ER, via the Golgi up to the trans Golgi network. Coatomer complex is required for budding from Golgi membranes, and is essential for the retrograde Golgi-to-ER transport of dilysine-tagged proteins. Required for mitochondrial morphology. The chain is Coatomer subunit beta (SEC26) from Saccharomyces cerevisiae (strain ATCC 204508 / S288c) (Baker's yeast).